The primary structure comprises 2136 residues: U5 small nuclear ribonucleoprotein 200 kDa helicase (2136 aa).

A phosphoserine mark is found at Ser17 and Ser26. Residues 39–81 (EVLSLVGKLEGTRMGDKAQRTKPQMQEERRAKRRKRDEDRHDM) form a disordered region. Lys46 participates in a covalent cross-link: Glycyl lysine isopeptide (Lys-Gly) (interchain with G-Cter in SUMO2). The segment covering 48-81 (EGTRMGDKAQRTKPQMQEERRAKRRKRDEDRHDM) has biased composition (basic and acidic residues). The stretch at 54–84 (DKAQRTKPQMQEERRAKRRKRDEDRHDMNKM) forms a coiled coil. Ser225 is modified (phosphoserine). At Thr389 the chain carries Phosphothreonine. An interaction with C9orf78 and WBP4 region spans residues 395 to 2129 (DLDQGGEALA…YKFSVDVKEA (1735 aa)). The Helicase ATP-binding 1 domain occupies 490–673 (RAALETDENL…FLRVDPAKGL (184 aa)). 503–510 (APTGAGKT) lines the ATP pocket. Positions 615–618 (DEIH) match the DEAH box motif. Positions 684 to 921 (PLEQTYVGIT…NAKDAVNWLG (238 aa)) constitute a Helicase C-terminal 1 domain. Phosphotyrosine is present on Tyr709. Lys944 participates in a covalent cross-link: Glycyl lysine isopeptide (Lys-Gly) (interchain with G-Cter in SUMO). Lys971 bears the N6-acetyllysine; alternate mark. Lys971 participates in a covalent cross-link: Glycyl lysine isopeptide (Lys-Gly) (interchain with G-Cter in SUMO); alternate. The SEC63 1 domain occupies 982 to 1286 (TELGRIASHY…SCETQLPVSF (305 aa)). Glycyl lysine isopeptide (Lys-Gly) (interchain with G-Cter in SUMO) cross-links involve residues Lys1071 and Lys1199. The tract at residues 1282-2136 (LPVSFRHLIL…KEAETDSDSD (855 aa)) is interaction with TSSC4. The Helicase ATP-binding 2 domain maps to 1337–1512 (NTVYNSDDNV…WLGCSATSTF (176 aa)). 1350–1357 (APTGSGKT) contributes to the ATP binding site. Thr1428 is modified (phosphothreonine). A DEAH box motif is present at residues 1454-1457 (DEVH). Residues 1545-1753 (PVYHAITKHS…TIENKQDAVD (209 aa)) enclose the Helicase C-terminal 2 domain. At Thr1765 the chain carries Phosphothreonine. Residues 1812-2124 (PLNLGMIAAY…GCDQEYKFSV (313 aa)) enclose the SEC63 2 domain. Ser2002 is modified (phosphoserine). Lys2091 is covalently cross-linked (Glycyl lysine isopeptide (Lys-Gly) (interchain with G-Cter in SUMO)). Thr2131 bears the Phosphothreonine mark. Phosphoserine occurs at positions 2133 and 2135.

The protein belongs to the helicase family. SKI2 subfamily. As to quaternary structure, component of a core complex containing at least PRPF8, SNRNP200, EFTUD2 and SNRNP40. Component of the U5 snRNP and U4/U6-U5 tri-snRNP complexes, building blocks of the spliceosome. Component of the U4/U6-U5 tri-snRNP complex composed of the U4, U6 and U5 snRNAs and at least PRPF3, PRPF4, PRPF6, PRPF8, PRPF31, SNRNP200, TXNL4A, SNRNP40, DDX23, CD2BP2, PPIH, SNU13, EFTUD2, SART1 and USP39. Component of precatalytic, catalytic and postcatalytic spliceosomal complexes. Component of the minor spliceosome, which splices U12-type introns. Interacts with C9orf78; the interaction is direct and mutually exclusive with its interaction with WBP4. Interacts with WBP4; the interaction is mutually exclusive with its interaction with C9orf78. Interacts with PRPF8. Interacts with TSSC4; the interaction is direct, excludes recruitment of C9ORF78 and WBP4 to SNRNP200 and negatively regulates its RNA helicase activity.

It is found in the nucleus. The catalysed reaction is ATP + H2O = ADP + phosphate + H(+). Catalyzes the ATP-dependent unwinding of U4/U6 RNA duplices, an essential step in the assembly of a catalytically active spliceosome. Plays a role in pre-mRNA splicing as core component of precatalytic, catalytic and postcatalytic spliceosomal complexes. As a component of the minor spliceosome, involved in the splicing of U12-type introns in pre-mRNAs. Involved in spliceosome assembly, activation and disassembly. Mediates changes in the dynamic network of RNA-RNA interactions in the spliceosome. This Mus musculus (Mouse) protein is U5 small nuclear ribonucleoprotein 200 kDa helicase (Snrnp200).